A 229-amino-acid chain; its full sequence is 5'-methylthioadenosine/S-adenosylhomocysteine nucleosidase (229 aa).

Glutamate 12 functions as the Proton acceptor in the catalytic mechanism. Substrate is bound by residues glycine 78, isoleucine 152, and 173 to 174 (ME). The active-site Proton donor is aspartate 197.

The protein belongs to the PNP/UDP phosphorylase family. MtnN subfamily.

It catalyses the reaction S-adenosyl-L-homocysteine + H2O = S-(5-deoxy-D-ribos-5-yl)-L-homocysteine + adenine. It carries out the reaction S-methyl-5'-thioadenosine + H2O = 5-(methylsulfanyl)-D-ribose + adenine. The catalysed reaction is 5'-deoxyadenosine + H2O = 5-deoxy-D-ribose + adenine. It functions in the pathway amino-acid biosynthesis; L-methionine biosynthesis via salvage pathway; S-methyl-5-thio-alpha-D-ribose 1-phosphate from S-methyl-5'-thioadenosine (hydrolase route): step 1/2. Catalyzes the irreversible cleavage of the glycosidic bond in both 5'-methylthioadenosine (MTA) and S-adenosylhomocysteine (SAH/AdoHcy) to adenine and the corresponding thioribose, 5'-methylthioribose and S-ribosylhomocysteine, respectively. Also cleaves 5'-deoxyadenosine, a toxic by-product of radical S-adenosylmethionine (SAM) enzymes, into 5-deoxyribose and adenine. The chain is 5'-methylthioadenosine/S-adenosylhomocysteine nucleosidase from Haemophilus influenzae (strain PittGG).